The following is a 195-amino-acid chain: UPF0316 protein Pcar_2434 (195 aa).

3 helical membrane-spanning segments follow: residues 13–33 (LFLLPLLVFFARIIDVSIGTL), 45–65 (WAGVLGFFESLIWVLAISQVM), and 71–91 (VWTYIAFALGFATGNYVGVLI).

This sequence belongs to the UPF0316 family.

The protein localises to the cell membrane. This chain is UPF0316 protein Pcar_2434, found in Syntrophotalea carbinolica (strain DSM 2380 / NBRC 103641 / GraBd1) (Pelobacter carbinolicus).